The following is a 202-amino-acid chain: Large ribosomal subunit protein eL13 (202 aa).

The disordered stretch occupies residues G183–K202.

Belongs to the eukaryotic ribosomal protein eL13 family. As to quaternary structure, component of the large ribosomal subunit. Mature ribosomes consist of a small (40S) and a large (60S) subunit. The 40S subunit contains about 32 different proteins and 1 molecule of RNA (18S). The 60S subunit contains 45 different proteins and 3 molecules of RNA (25S, 5.8S and 5S).

The protein resides in the cytoplasm. Its function is as follows. Component of the ribosome, a large ribonucleoprotein complex responsible for the synthesis of proteins in the cell. The small ribosomal subunit (SSU) binds messenger RNAs (mRNAs) and translates the encoded message by selecting cognate aminoacyl-transfer RNA (tRNA) molecules. The large subunit (LSU) contains the ribosomal catalytic site termed the peptidyl transferase center (PTC), which catalyzes the formation of peptide bonds, thereby polymerizing the amino acids delivered by tRNAs into a polypeptide chain. The nascent polypeptides leave the ribosome through a tunnel in the LSU and interact with protein factors that function in enzymatic processing, targeting, and the membrane insertion of nascent chains at the exit of the ribosomal tunnel. In Candida albicans (strain SC5314 / ATCC MYA-2876) (Yeast), this protein is Large ribosomal subunit protein eL13.